We begin with the raw amino-acid sequence, 481 residues long: MSPQTETKTSVGFKAGVKDYKLTYYTPDYETKPTDILAAFRVTPQPGVPPEEAGAAVAAESSTGTWTTVWTDGLTSLDRYKGRCYHIERVFGEKDQYIAYVAYPLDLFEEGSVTNMFTSIVGNVFGFKALRALRLEDLRIPPAYTKTFQGPPHGIQVERDKLNKYGRPLLGCTIKPKLGLSAKNYGRAVYECLRGGLDFTKDDENVNSQPFMRWRDRFLFCAEAIYKSQAETGEIKGHYLNATAGTCEEMLRRACFAKELGVPIIMHDYLTGGFTANTSLAHFCRENGLLLHIHRAMHAVIDRQKNHGIHFRVLAKALRLSGGDHIHAGTVVGKLEGEREITLGFVDLLRDNFVEKDRSRGIYFTQDWVSLPGVLPVASGGIHVWHMPALTDIFGDDSVLQFGGGTLGHPWGNAPGAVANRVALEACVQARNEGLNLAQDGNSIIRQASKWSPELAAACEVWKEIQFNFKSVDTLDLNEIK.

A propeptide spanning residues 1 to 2 is cleaved from the precursor; that stretch reads MS. Position 3 is an N-acetylproline (proline 3). Lysine 14 is modified (N6,N6,N6-trimethyllysine). Residues asparagine 123 and threonine 173 each coordinate substrate. The active-site Proton acceptor is the lysine 175. Residue lysine 177 coordinates substrate. Mg(2+)-binding residues include lysine 201, aspartate 203, and glutamate 204. Lysine 201 bears the N6-carboxylysine mark. The active-site Proton acceptor is histidine 294. The substrate site is built by arginine 295, histidine 327, and serine 379.

Belongs to the RuBisCO large chain family. Type I subfamily. As to quaternary structure, heterohexadecamer of 8 large chains and 8 small chains; disulfide-linked. The disulfide link is formed within the large subunit homodimers. Mg(2+) is required as a cofactor. Post-translationally, the disulfide bond which can form in the large chain dimeric partners within the hexadecamer appears to be associated with oxidative stress and protein turnover.

The protein localises to the plastid. It carries out the reaction 2 (2R)-3-phosphoglycerate + 2 H(+) = D-ribulose 1,5-bisphosphate + CO2 + H2O. The enzyme catalyses D-ribulose 1,5-bisphosphate + O2 = 2-phosphoglycolate + (2R)-3-phosphoglycerate + 2 H(+). Functionally, ruBisCO catalyzes two reactions: the carboxylation of D-ribulose 1,5-bisphosphate, the primary event in carbon dioxide fixation, as well as the oxidative fragmentation of the pentose substrate in the photorespiration process. Both reactions occur simultaneously and in competition at the same active site. The sequence is that of Ribulose bisphosphate carboxylase large chain from Cuscuta gronovii (Common dodder).